The chain runs to 376 residues: MKILIDENMPYAAELFSGLGEVIAKSGRTLTADDLIDVDALMIRSVTKVNAELIEKANKLKFVGTATAGMDHVDQALLKEKGIFFTAAPGCNKVGVAEYVLSCLMVLAQQHGFSIFDKTFGIVGAGQVGSYLAQCLDALNISYLLNDPIKEQEGDSRSFVALDELLEKSDVITLHTPITRDGEYPTHHLIGQKTLSKLRNDQILINAARGPVVDNQALKQRLLKQDGFKAVLDVFEFEPDVDMELLPLLSFATPHIAGYGLEGKARGTTMIFNFYCEFLKRNERADPQTLLPIAPIPNVTLNQQWDHSTLHNLIQLVYDVRKDDAVFRKEIATVGAFDKMRKDYWDRREYSAITITGTQCCDLTPLQQLGFTIEEV.

The substrate site is built by S45 and T67. Residues 127–128 (QV), D147, and T176 contribute to the NAD(+) site. The active site involves R209. Position 233 (D233) interacts with NAD(+). The active site involves E238. The active-site Proton donor is H255. G258 contributes to the NAD(+) binding site. Residue Y259 coordinates substrate.

It belongs to the D-isomer specific 2-hydroxyacid dehydrogenase family. PdxB subfamily. Homodimer.

Its subcellular location is the cytoplasm. It catalyses the reaction 4-phospho-D-erythronate + NAD(+) = (R)-3-hydroxy-2-oxo-4-phosphooxybutanoate + NADH + H(+). It functions in the pathway cofactor biosynthesis; pyridoxine 5'-phosphate biosynthesis; pyridoxine 5'-phosphate from D-erythrose 4-phosphate: step 2/5. In terms of biological role, catalyzes the oxidation of erythronate-4-phosphate to 3-hydroxy-2-oxo-4-phosphonooxybutanoate. This Aliivibrio fischeri (strain ATCC 700601 / ES114) (Vibrio fischeri) protein is Erythronate-4-phosphate dehydrogenase.